The primary structure comprises 511 residues: Neuronal acetylcholine receptor subunit alpha-2 (511 aa).

The signal sequence occupies residues 1–27 (MTLSHSALQFWTHLYLWCLLLVPAVLT). The Extracellular segment spans residues 28–241 (QQGSHTHAED…VTYYFVIRRL (214 aa)). N-linked (GlcNAc...) asparagine glycosylation is found at asparagine 56 and asparagine 106. An intrachain disulfide couples cysteine 160 to cysteine 174. The N-linked (GlcNAc...) asparagine glycan is linked to asparagine 212. Cysteines 224 and 225 form a disulfide. The next 3 membrane-spanning stretches (helical) occupy residues 242–266 (PLFYTINLIIPCLLISCLTVLVFYL), 274–292 (ITLCISVLLSLTVFLLLIT), and 308–329 (YLLFTMIFVTLSIVITVFVLNV). Over 330-484 (HHRSPSTHNM…WKYVAMVVDR (155 aa)) the chain is Cytoplasmic. A helical transmembrane segment spans residues 485–503 (IFLWLFIIVCFLGTIGLFL).

This sequence belongs to the ligand-gated ion channel (TC 1.A.9) family. Acetylcholine receptor (TC 1.A.9.1) subfamily. Alpha-2/CHRNA2 sub-subfamily. Neuronal AChR seems to be composed of two different types of subunits: alpha and non-alpha (beta). CHRNA2/Alpha-2 subunit can be combined to CHRNB2/beta-2 or CHRNB4/beta-4 to give rise to functional receptors. The alpha-2:beta-2 nAChR complex is proposed to be a heteropentamer with two subtypes: LS (low agonist sensitivity) with a (alpha-2)3:(beta-2)2 and HS (high agonist sensitivity) with a (alpha-2)2:(beta-2)3 stoichiometry; the subtypes differ in their subunit binding interfaces which are involved in ligand binding.

It is found in the synaptic cell membrane. The protein localises to the cell membrane. The catalysed reaction is Ca(2+)(in) = Ca(2+)(out). It catalyses the reaction K(+)(in) = K(+)(out). It carries out the reaction Na(+)(in) = Na(+)(out). In terms of biological role, component of neuronal acetylcholine receptors (nAChRs) that function as pentameric, ligand-gated cation channels with high calcium permeability among other activities. nAChRs are excitatory neurotrasnmitter receptors formed by a collection of nAChR subunits known to mediate synaptic transmission in the nervous system and the neuromuscular junction. Each nAchR subunit confers differential attributes to channel properties, including activation, deactivation and desensitization kinetics, pH sensitivity, cation permeability, and binding to allosteric modulators. CHRNA2 forms heteropentameric neuronal acetylcholine receptors with CHRNB2 and CHRNB4 and plays a role in nicotine dependence. This is Neuronal acetylcholine receptor subunit alpha-2 (Chrna2) from Rattus norvegicus (Rat).